An 817-amino-acid chain; its full sequence is MDNQYQPKEIEAEAQAYWEQQQTFQAREDSARPKYYCLSMFPYPSGRLHMGHVRNYTIGDVVSRYKRMQGYNVLQPMGWDAFGLPAENAAMERGVPPAAWTRENIGAMREQLKGLGFGYDWSRELATCDPEYYRWEQWLFIRLYRKGLVYRDTAAVNWDPVDQTVLANEQVIEGRGWRSGALVERREIPQWFLRITDYADELLEALDELDGWPEQVRNMQRNWIGRSEGVELSFDLAGRDEQLTVFTTRPDTLYGVTYMGLAPEHPISLELAEHHPAIAELVEEARSGGTAEADLATREKRGADTGLEAIHPLTGERIPVWVANFVLMEYGSGAVMAVPAHDQRDWEFASTYGLPIRPVVHPADGTELDIAAGAFSDYGVLADSGPFSGMPSDRAFAAIAERLEAEGRGQRRVQYRLRDWGVSRQRYWGAPIPMIHCADCGPVPVPDDQLPVTLPEDVEISGGGSPLKSMPAFYQTACPQCGADAERETDTFDTFMESSWYFARFACADQDGAMLDERADHWTPVDQYIGGIEHAVLHLLYARFYHKVLRDEGLVSSDEPFTRLLTQGMVLKDGTKMSKSKGNTVDPQELVDRFGADTVRLFTMFAAPPDQSLEWSDSGVEGAYRFLRRLHGLVRDHVAAGPAPALDPQALSDTQRDLRRKVHETIAKASDDVGKRLTFNTAIAAVMELCNALGKAQDDSAAGRAVMQEGLEAAVLILAPITPHLCHHLWFQLGHTAPVVEAPWPEADKQALVRDEVELVVQVNGKLRGHVTLPADADQQQAQEAALAEHNVQRFVADKEIKKVVFVPGKLINVVAK.

A 'HIGH' region motif is present at residues 42–52; sequence PYPSGRLHMGH. A 'KMSKS' region motif is present at residues 576-580; that stretch reads KMSKS. Lys-579 contacts ATP.

Belongs to the class-I aminoacyl-tRNA synthetase family.

The protein resides in the cytoplasm. The enzyme catalyses tRNA(Leu) + L-leucine + ATP = L-leucyl-tRNA(Leu) + AMP + diphosphate. The polypeptide is Leucine--tRNA ligase (Halorhodospira halophila (strain DSM 244 / SL1) (Ectothiorhodospira halophila (strain DSM 244 / SL1))).